We begin with the raw amino-acid sequence, 615 residues long: Cysteine-rich receptor-like protein kinase 1 (615 aa).

The signal sequence occupies residues 1 to 28 (MQICASIAQFLAWVSFLVLLATVGSSSS). Gnk2-homologous domains lie at 29 to 131 (SESL…DRDF) and 137 to 237 (DPTF…THKF). Residues 29–266 (SESLLNCQPL…SFFPHLSDRD (238 aa)) lie on the Extracellular side of the membrane. N-linked (GlcNAc...) asparagine glycosylation is found at Asn100 and Asn165. A helical transmembrane segment spans residues 267–287 (VTRLAIAAISLSILTSLGAFI). Residues 288–615 (SYRRVSRKRK…VLMPDEETRV (328 aa)) are Cytoplasmic-facing. In terms of domain architecture, Protein kinase spans 318–602 (FHDSMKLGQG…FEYPKQPPFL (285 aa)). ATP-binding positions include 324 to 332 (LGQGGAGSV) and Lys346. Catalysis depends on Asp443, which acts as the Proton acceptor.

The protein belongs to the protein kinase superfamily. Ser/Thr protein kinase family. CRK subfamily. In terms of tissue distribution, expressed in the whole plant at low levels.

It is found in the membrane. The catalysed reaction is L-seryl-[protein] + ATP = O-phospho-L-seryl-[protein] + ADP + H(+). It catalyses the reaction L-threonyl-[protein] + ATP = O-phospho-L-threonyl-[protein] + ADP + H(+). This Arabidopsis thaliana (Mouse-ear cress) protein is Cysteine-rich receptor-like protein kinase 1.